We begin with the raw amino-acid sequence, 956 residues long: Zinc fingers and homeoboxes protein 3 (956 aa).

The interval 1 to 107 (MASKRKSTTP…SEHTDFNKDP (107 aa)) is required for nuclear localization. Residues 22–66 (DASMEAQPAETLPEGPQQDLPPEASAASSEAAQNPSSTDGSTLAN) are disordered. Over residues 42–58 (PPEASAASSEAAQNPSS) the composition is skewed to low complexity. C2H2-type zinc fingers lie at residues 77–100 (YSCK…NSEH) and 109–132 (FVCS…ATCH). A required for homodimerization and interaction with NFYA region spans residues 242–488 (ASASSAKNPH…LLTACPSITS (247 aa)). The tract at residues 303-502 (LSSIPTYNAA…DASIYKNKKS (200 aa)) is required for repressor activity. 2 consecutive DNA-binding regions (homeobox) follow at residues 304 to 363 (SSIP…GISW) and 494 to 553 (ASIY…RNLK). The tract at residues 497-555 (YKNKKSHEQLSALKGSFCRNQFPGQSEVEHLTKVTGLSTREVRKWFSDRRYHCRNLKGS) is required for nuclear localization. Disordered stretches follow at residues 598-618 (PSAK…KYKE) and 666-695 (KVNA…GEED). Serine 599 and serine 604 each carry phosphoserine. A DNA-binding region (homeobox 3) is located at residues 612–671 (TPTKYKERAPEQLRALESSFAQNPLPLDEELDRLRSETKMTRREIDSWFSERRKKVNAEE). Positions 666 to 677 (KVNAEETKKAEE) are enriched in basic and acidic residues. Over residues 679–695 (ASQEEEEAAEDEGGEED) the composition is skewed to acidic residues. Serine 680, serine 708, and serine 723 each carry phosphoserine. 2 DNA-binding regions (homeobox) span residues 764 to 823 (PGKV…KNGQ) and 835 to 894 (FPPG…TRAV). Residues 890 to 956 (ETRAVADTGS…PQAGRQLETD (67 aa)) are disordered. 2 positions are modified to phosphoserine: serine 927 and serine 946.

Belongs to the ZHX family. As to quaternary structure, homodimer (via homeobox domain 1). Heterodimer with ZHX1 (via homeobox domain 1). Heterodimer with ZHX2 (via homeobox domain 1). Heterodimerization with ZHX1 is a prerequisite for repressor activity. Interacts with NFYA. As to expression, widely expressed. High expression in kidney. Expressed during osteogenic differentiation.

The protein resides in the nucleus. Functionally, acts as a transcriptional repressor. Involved in the early stages of mesenchymal stem cell (MSC) osteogenic differentiation. Is a regulator of podocyte gene expression during primary glomerula disease. Binds to promoter DNA. This is Zinc fingers and homeoboxes protein 3 (ZHX3) from Homo sapiens (Human).